We begin with the raw amino-acid sequence, 375 residues long: DNA replication and repair protein RecF (375 aa).

30 to 37 (GENAQGKT) contributes to the ATP binding site.

This sequence belongs to the RecF family.

It is found in the cytoplasm. Functionally, the RecF protein is involved in DNA metabolism; it is required for DNA replication and normal SOS inducibility. RecF binds preferentially to single-stranded, linear DNA. It also seems to bind ATP. The polypeptide is DNA replication and repair protein RecF (Bacillus cereus (strain G9842)).